The following is a 164-amino-acid chain: Phosphopantetheine adenylyltransferase (164 aa).

A substrate-binding site is contributed by Ser-9. Residues 9–10 (SF) and His-17 contribute to the ATP site. Substrate is bound by residues Lys-41, Leu-73, and Lys-87. ATP contacts are provided by residues 88-90 (GLR), Glu-98, and 122-128 (YSYLSSS).

It belongs to the bacterial CoaD family. Homohexamer. Mg(2+) is required as a cofactor.

It localises to the cytoplasm. It catalyses the reaction (R)-4'-phosphopantetheine + ATP + H(+) = 3'-dephospho-CoA + diphosphate. The protein operates within cofactor biosynthesis; coenzyme A biosynthesis; CoA from (R)-pantothenate: step 4/5. Functionally, reversibly transfers an adenylyl group from ATP to 4'-phosphopantetheine, yielding dephospho-CoA (dPCoA) and pyrophosphate. The sequence is that of Phosphopantetheine adenylyltransferase from Rhodococcus jostii (strain RHA1).